We begin with the raw amino-acid sequence, 778 residues long: DNA topoisomerase 1 (778 aa).

Residues 1 to 141 form a disordered region; the sequence is MNSSDEEDIA…ETPEEDQGYK (141 aa). Low complexity predominate over residues 17–26; that stretch reads KSSSITSAST. Composition is skewed to basic and acidic residues over residues 71 to 83 and 100 to 121; these read VKTE…EPKS and EKTT…ESKT. The segment covering 122–131 has biased composition (polar residues); sequence QSDSQASVKS. Interaction with DNA regions lie at residues 367–368, 430–435, and 522–524; these read KY, RAGGEK, and TAK. Positions 374-778 constitute a Topo IB-type catalytic domain; sequence NSSVKGQSDF…IESADENWRF (405 aa). The active-site O-(3'-phospho-DNA)-tyrosine intermediate is the tyrosine 736.

This sequence belongs to the type IB topoisomerase family.

It carries out the reaction ATP-independent breakage of single-stranded DNA, followed by passage and rejoining.. Releases the supercoiling and torsional tension of DNA introduced during the DNA replication and transcription by transiently cleaving and rejoining one strand of the DNA duplex. Introduces a single-strand break via transesterification at a target site in duplex DNA. The scissile phosphodiester is attacked by the catalytic tyrosine of the enzyme, resulting in the formation of a DNA-(3'-phosphotyrosyl)-enzyme intermediate and the expulsion of a 5'-OH DNA strand. The free DNA strand then rotates around the intact phosphodiester bond on the opposing strand, thus removing DNA supercoils. Finally, in the religation step, the DNA 5'-OH attacks the covalent intermediate to expel the active-site tyrosine and restore the DNA phosphodiester backbone. The sequence is that of DNA topoisomerase 1 (TOP1) from Candida albicans (Yeast).